The sequence spans 398 residues: MNIHEYQAKRLLHEYGAPIANGVAVYSVEQAEKWAKKLPGPLYVVKSQIHAGGRGKGKFKELDPDAKGGVRLAKSVEEVVANVKEMLGKTLVTKQTGPEGKQVNRLYIEDGADIERELYLSLLVDRNVGRVAFVVSTEGGMDIETVAEETPEKILTLPINSTQGVTSSDCARLCDALDLHDSAREDGEKLFPILYKAFCEKDMSLLEINPLIVMTNGHLRVLDAKVSFDNNALFRHPDILELRDTSEEDPKEIEASKHDLAYVALEGTIGCMVNGAGLAMATMDIIKLYGAEPANFLDVGGGASKEKVTAAFKIITADPNVKGILVNIFGGIMRCDVIAEGVVAAVREVGLKVPLVVRLEGTNVEQGKAIISDSGLNVIPADDLDDAAQKIVAAVKGA.

Residues 9–254 (KRLLHEYGAP…TSEEDPKEIE (246 aa)) form the ATP-grasp domain. ATP is bound by residues K46, 53 to 55 (GRG), E109, A112, and E117. N209 and D223 together coordinate Mg(2+). Substrate contacts are provided by residues N274 and 331-333 (GIM).

It belongs to the succinate/malate CoA ligase beta subunit family. In terms of assembly, heterotetramer of two alpha and two beta subunits. It depends on Mg(2+) as a cofactor.

The catalysed reaction is succinate + ATP + CoA = succinyl-CoA + ADP + phosphate. It catalyses the reaction GTP + succinate + CoA = succinyl-CoA + GDP + phosphate. It functions in the pathway carbohydrate metabolism; tricarboxylic acid cycle; succinate from succinyl-CoA (ligase route): step 1/1. In terms of biological role, succinyl-CoA synthetase functions in the citric acid cycle (TCA), coupling the hydrolysis of succinyl-CoA to the synthesis of either ATP or GTP and thus represents the only step of substrate-level phosphorylation in the TCA. The beta subunit provides nucleotide specificity of the enzyme and binds the substrate succinate, while the binding sites for coenzyme A and phosphate are found in the alpha subunit. The chain is Succinate--CoA ligase [ADP-forming] subunit beta from Bartonella henselae (strain ATCC 49882 / DSM 28221 / CCUG 30454 / Houston 1) (Rochalimaea henselae).